The primary structure comprises 283 residues: Release factor glutamine methyltransferase (283 aa).

S-adenosyl-L-methionine is bound by residues 121 to 125 (GTGSG), D144, and N188. 188 to 191 (NPPY) contributes to the substrate binding site.

Belongs to the protein N5-glutamine methyltransferase family. PrmC subfamily.

It carries out the reaction L-glutaminyl-[peptide chain release factor] + S-adenosyl-L-methionine = N(5)-methyl-L-glutaminyl-[peptide chain release factor] + S-adenosyl-L-homocysteine + H(+). In terms of biological role, methylates the class 1 translation termination release factors RF1/PrfA and RF2/PrfB on the glutamine residue of the universally conserved GGQ motif. This is Release factor glutamine methyltransferase from Bacillus cereus (strain ATCC 14579 / DSM 31 / CCUG 7414 / JCM 2152 / NBRC 15305 / NCIMB 9373 / NCTC 2599 / NRRL B-3711).